The following is a 578-amino-acid chain: mRNA-decapping enzyme 1B (578 aa).

Position 2 is an N-acetylalanine (Ala-2). Phosphoserine occurs at positions 144 and 145. Disordered regions lie at residues 187–222 (AICD…PEPQ) and 246–265 (RTFA…TRPV). Basic residues predominate over residues 248–257 (FAHHHHHHHQ). A phosphoserine mark is found at Ser-274 and Ser-335. The residue at position 380 (Thr-380) is a Phosphothreonine.

This sequence belongs to the DCP1 family. In terms of assembly, interacts with DCP1A.

Its subcellular location is the cytoplasm. The protein localises to the nucleus. It carries out the reaction a 5'-end (N(7)-methyl 5'-triphosphoguanosine)-ribonucleoside in mRNA + H2O = N(7)-methyl-GDP + a 5'-end phospho-ribonucleoside in mRNA + 2 H(+). Its function is as follows. May play a role in the degradation of mRNAs, both in normal mRNA turnover and in nonsense-mediated mRNA decay. May remove the 7-methyl guanine cap structure from mRNA molecules, yielding a 5'-phosphorylated mRNA fragment and 7m-GDP. The chain is mRNA-decapping enzyme 1B (Dcp1b) from Mus musculus (Mouse).